The sequence spans 138 residues: UPF0310 protein MAV_1800 (138 aa).

This sequence belongs to the UPF0310 family.

This Mycobacterium avium (strain 104) protein is UPF0310 protein MAV_1800.